Here is a 51-residue protein sequence, read N- to C-terminus: MARNKPLGKKLRLGAALKSNRNPPVWVVAKTKRRVTRSPTRRHWRRVKLKA.

Positions 32-51 (KRRVTRSPTRRHWRRVKLKA) are disordered.

It belongs to the eukaryotic ribosomal protein eL39 family.

This chain is Large ribosomal subunit protein eL39, found in Pyrobaculum arsenaticum (strain DSM 13514 / JCM 11321 / PZ6).